The primary structure comprises 229 residues: Prolactin (229 aa).

The signal sequence occupies residues 1–30; that stretch reads MDNKGWSLKGSLLFLLLLLSDLLLCKSVAS. An intrachain disulfide couples C34 to C41. S56 is modified (phosphoserine). N-linked (GlcNAc...) asparagine glycosylation occurs at N61. A phosphoserine mark is found at S64 and S120. Cystine bridges form between C88–C204 and C221–C229.

It belongs to the somatotropin/prolactin family. As to quaternary structure, interacts with PRLR.

Its subcellular location is the secreted. Prolactin acts primarily on the mammary gland by promoting lactation. The polypeptide is Prolactin (PRL) (Felis catus (Cat)).